Here is a 237-residue protein sequence, read N- to C-terminus: UDP-Gal:alpha-D-GlcNAc-diphosphoundecaprenol beta-1,4-galactosyltransferase (237 aa).

Glutamate 101 functions as the Nucleophile in the catalytic mechanism.

The protein belongs to the glycosyltransferase 26 family. Mn(2+) serves as cofactor. Ni(2+) is required as a cofactor. Requires Pb(2+) as cofactor.

The enzyme catalyses N-acetyl-alpha-D-glucosaminyl-di-trans,octa-cis-undecaprenyl diphosphate + UDP-alpha-D-galactose = beta-D-Gal-(1-&gt;4)-alpha-D-GlcNAc-di-trans,octa-cis-undecaprenyl diphosphate + UDP + H(+). It participates in bacterial outer membrane biogenesis; LPS O-antigen biosynthesis. In terms of biological role, galactosyltransferase that adds one galactose residue in the beta-1-4 linkage to GlcNAc-alpha-pyrophosphate-lipid in the biosynthesis of the O-polysaccharide repeating unit of the O antigen. The polypeptide is UDP-Gal:alpha-D-GlcNAc-diphosphoundecaprenol beta-1,4-galactosyltransferase (wfeD) (Shigella boydii).